A 702-amino-acid polypeptide reads, in one-letter code: MNSLFASTARGLEELLKTELESLGARECQVVQGGVHFEGDTRLIYQSLMWSRLASRIMLPLGACKVYSDLDLYLGVQATDWTEIFAPGATFAVHFSGLNDEIRNSQYGALKVKDAIVDSFTRKNLERPNVDRENPDLRINVWLNKETAHISLDLCGEGLHQRGYRDRAGIAPIKENLAAAIVMRSGWQPGTPLLDPMCGSGTLLIEAAMMATDRAPGLHRGQWGFNGWAQHDDAIWKEVKAEAQVRARKGLADYGSRFYGSDSDARVIERAASNARRAGIGELISFEVKDVAQLTNPLPKGPYGTVISNPPYGERLDSEPALIALHSLLGRSMKDYFGGWNLSLFSGSPELLSCLQLRAERQFKAKNGPLDCVQKNYHLTEKEGDSKPSTVAEDYANRLRKNLKKFEKWAKQEGIECYRLYDADLPEYNVAVDRYADWIVVQEYAAPKTIDAQKARQRLLDIIAATIGVLGIAPNKLVLKTRERQKGTNQYQKMSDKGDFIEVGEYNARLWVNLTDYLDTGLFLDHRIARRMLGQMSKGKDFLNLFAYTGSASVHAGLGGARSTTTMDMSRTYLEWAERNLRLNGLTGRQHRLLQADVLGWLRDTDEQFDLIFIDPPTFSNSKRMEDTFDVQRDHIRLMSDLKRLLRKGGTIMFSNNKRGFRMDNDGLAALGLKAQEISQKTLSQDFARNRQIHNCWLITAV.

The THUMP domain maps to 43 to 154 (LIYQSLMWSR…KETAHISLDL (112 aa)).

This sequence belongs to the methyltransferase superfamily. RlmKL family.

It localises to the cytoplasm. It carries out the reaction guanosine(2445) in 23S rRNA + S-adenosyl-L-methionine = N(2)-methylguanosine(2445) in 23S rRNA + S-adenosyl-L-homocysteine + H(+). The enzyme catalyses guanosine(2069) in 23S rRNA + S-adenosyl-L-methionine = N(2)-methylguanosine(2069) in 23S rRNA + S-adenosyl-L-homocysteine + H(+). In terms of biological role, specifically methylates the guanine in position 2445 (m2G2445) and the guanine in position 2069 (m7G2069) of 23S rRNA. This chain is Ribosomal RNA large subunit methyltransferase K/L, found in Enterobacter sp. (strain 638).